We begin with the raw amino-acid sequence, 259 residues long: Uridylate kinase (259 aa).

21-24 (KLSG) is a binding site for ATP. Residue glycine 63 coordinates UMP. ATP contacts are provided by glycine 64 and arginine 68. Residues aspartate 83 and 144–151 (TGNPYFTT) each bind UMP. ATP is bound by residues threonine 171, phenylalanine 177, and aspartate 180.

This sequence belongs to the UMP kinase family. As to quaternary structure, homohexamer.

Its subcellular location is the cytoplasm. The enzyme catalyses UMP + ATP = UDP + ADP. It participates in pyrimidine metabolism; CTP biosynthesis via de novo pathway; UDP from UMP (UMPK route): step 1/1. Inhibited by UTP. Its function is as follows. Catalyzes the reversible phosphorylation of UMP to UDP. The chain is Uridylate kinase from Salinibacter ruber (strain DSM 13855 / M31).